Reading from the N-terminus, the 84-residue chain is Toxin BmKaTx13 (84 aa).

The signal sequence occupies residues M1–S19. The 63-residue stretch at R21–H83 folds into the LCN-type CS-alpha/beta domain. 4 cysteine pairs are disulfide-bonded: C31-C82, C35-C55, C41-C65, and C45-C67. A propeptide (removed by a carboxypeptidase) is located at residue R84.

Belongs to the long (4 C-C) scorpion toxin superfamily. Sodium channel inhibitor family. Alpha subfamily. As to expression, expressed by the venom gland.

It localises to the secreted. In terms of biological role, alpha toxins bind voltage-independently at site-3 of sodium channels (Nav) and inhibit the inactivation of the activated channels, thereby blocking neuronal transmission. This toxin is active against mammals. This chain is Toxin BmKaTx13, found in Olivierus martensii (Manchurian scorpion).